We begin with the raw amino-acid sequence, 393 residues long: Acyl-homoserine-lactone synthase OpaM (393 aa).

This sequence belongs to the LuxM / VanM family.

It catalyses the reaction a fatty acyl-[ACP] + S-adenosyl-L-methionine = an N-acyl-L-homoserine lactone + S-methyl-5'-thioadenosine + holo-[ACP] + H(+). In Vibrio parahaemolyticus serotype O3:K6 (strain RIMD 2210633), this protein is Acyl-homoserine-lactone synthase OpaM (opaM).